The following is a 156-amino-acid chain: Small ribosomal subunit protein uS7 (156 aa).

It belongs to the universal ribosomal protein uS7 family. As to quaternary structure, part of the 30S ribosomal subunit. Contacts proteins S9 and S11.

Functionally, one of the primary rRNA binding proteins, it binds directly to 16S rRNA where it nucleates assembly of the head domain of the 30S subunit. Is located at the subunit interface close to the decoding center, probably blocks exit of the E-site tRNA. The chain is Small ribosomal subunit protein uS7 from Phytoplasma australiense.